Consider the following 745-residue polypeptide: 5-methyltetrahydropteroyltriglutamate--homocysteine methyltransferase (745 aa).

5-methyltetrahydropteroyltri-L-glutamate-binding positions include 17–20 (RELK) and lysine 111. Residues 421-423 (IGS) and glutamate 474 contribute to the L-homocysteine site. L-methionine contacts are provided by residues 421 to 423 (IGS) and glutamate 474. 5-methyltetrahydropteroyltri-L-glutamate-binding positions include 505 to 506 (RC) and tryptophan 551. Aspartate 589 serves as a coordination point for L-homocysteine. Aspartate 589 is a binding site for L-methionine. Glutamate 595 serves as a coordination point for 5-methyltetrahydropteroyltri-L-glutamate. Zn(2+) is bound by residues histidine 631, cysteine 633, and glutamate 655. The active-site Proton donor is the histidine 684. A Zn(2+)-binding site is contributed by cysteine 716.

Belongs to the vitamin-B12 independent methionine synthase family. Requires Zn(2+) as cofactor.

It catalyses the reaction 5-methyltetrahydropteroyltri-L-glutamate + L-homocysteine = tetrahydropteroyltri-L-glutamate + L-methionine. The protein operates within amino-acid biosynthesis; L-methionine biosynthesis via de novo pathway; L-methionine from L-homocysteine (MetE route): step 1/1. In terms of biological role, catalyzes the transfer of a methyl group from 5-methyltetrahydrofolate to homocysteine resulting in methionine formation. This is 5-methyltetrahydropteroyltriglutamate--homocysteine methyltransferase from Thermodesulfovibrio yellowstonii (strain ATCC 51303 / DSM 11347 / YP87).